The chain runs to 25 residues: Aurein-5.2 (25 aa).

Expressed by the skin dorsal glands.

It localises to the secreted. Has antimicrobial activity against L.lactis and S.uberis. The chain is Aurein-5.2 from Ranoidea raniformis (Southern bell frog).